The sequence spans 172 residues: 3-hydroxydecanoyl-[acyl-carrier-protein] dehydratase (172 aa).

Residue His-71 is part of the active site.

This sequence belongs to the thioester dehydratase family. FabA subfamily. As to quaternary structure, homodimer.

Its subcellular location is the cytoplasm. It carries out the reaction a (3R)-hydroxyacyl-[ACP] = a (2E)-enoyl-[ACP] + H2O. The catalysed reaction is (3R)-hydroxydecanoyl-[ACP] = (2E)-decenoyl-[ACP] + H2O. The enzyme catalyses (2E)-decenoyl-[ACP] = (3Z)-decenoyl-[ACP]. Its pathway is lipid metabolism; fatty acid biosynthesis. Its function is as follows. Necessary for the introduction of cis unsaturation into fatty acids. Catalyzes the dehydration of (3R)-3-hydroxydecanoyl-ACP to E-(2)-decenoyl-ACP and then its isomerization to Z-(3)-decenoyl-ACP. Can catalyze the dehydratase reaction for beta-hydroxyacyl-ACPs with saturated chain lengths up to 16:0, being most active on intermediate chain length. The sequence is that of 3-hydroxydecanoyl-[acyl-carrier-protein] dehydratase from Yersinia pseudotuberculosis serotype O:1b (strain IP 31758).